The primary structure comprises 180 residues: Sec-independent protein translocase protein TatB (180 aa).

Residues 1–21 (MFDIGWSELLVIGVVALIAIG) form a helical membrane-spanning segment. The tract at residues 95 to 180 (IEGVDKPVES…AERLKDAKAS (86 aa)) is disordered. Positions 103 to 123 (ESQPAASAAPETSATVEAPAT) are enriched in low complexity. A compositionally biased stretch (basic and acidic residues) spans 170 to 180 (EAERLKDAKAS).

The protein belongs to the TatB family. In terms of assembly, the Tat system comprises two distinct complexes: a TatABC complex, containing multiple copies of TatA, TatB and TatC subunits, and a separate TatA complex, containing only TatA subunits. Substrates initially bind to the TatABC complex, which probably triggers association of the separate TatA complex to form the active translocon.

The protein resides in the cell inner membrane. Functionally, part of the twin-arginine translocation (Tat) system that transports large folded proteins containing a characteristic twin-arginine motif in their signal peptide across membranes. Together with TatC, TatB is part of a receptor directly interacting with Tat signal peptides. TatB may form an oligomeric binding site that transiently accommodates folded Tat precursor proteins before their translocation. The sequence is that of Sec-independent protein translocase protein TatB from Bradyrhizobium sp. (strain BTAi1 / ATCC BAA-1182).